Here is a 420-residue protein sequence, read N- to C-terminus: Phosphoribosylamine--glycine ligase (420 aa).

The ATP-grasp domain maps to 108–314 (KQFMEKYAIP…FAALIAALLN (207 aa)). 134–195 (LDERGVPIVI…EDFLAGEEFS (62 aa)) is an ATP binding site. The Mg(2+) site is built by Glu284 and Asn286.

Belongs to the GARS family. Mg(2+) serves as cofactor. It depends on Mn(2+) as a cofactor.

The enzyme catalyses 5-phospho-beta-D-ribosylamine + glycine + ATP = N(1)-(5-phospho-beta-D-ribosyl)glycinamide + ADP + phosphate + H(+). Its pathway is purine metabolism; IMP biosynthesis via de novo pathway; N(1)-(5-phospho-D-ribosyl)glycinamide from 5-phospho-alpha-D-ribose 1-diphosphate: step 2/2. The protein is Phosphoribosylamine--glycine ligase of Listeria innocua serovar 6a (strain ATCC BAA-680 / CLIP 11262).